We begin with the raw amino-acid sequence, 262 residues long: MPIPGTPSRAELAEHLVRTRIAGDVATPRENNLSHYRKLANGDRGFWLGLELGDRWSDEQDVLAVMAERVGVNDDPEHRYGQDTIDPELTISALERMAGRLRKAADGGQRVLFATGHPGGLLDVHRATAAALRDAGCEIVVIPEGLTTEEGYVQQFADVSVLEHGASLWHTHSGEPMKAILTGLEREGRPLPDLVVADHGWAGYAAQHGVDSVGYADCNDPALFLAESEGTLQVAVPLDDHVVSPRYYDPMTAYLLTEAGLK.

Functionally, displays phosphatase activity against p-nitrophenyl phosphate (pNPP) in vitro; however, the physiological substrate is unknown. In Streptomyces coelicolor (strain ATCC BAA-471 / A3(2) / M145), this protein is Phosphatase SCO2771.